We begin with the raw amino-acid sequence, 706 residues long: Forkhead box protein P2 (706 aa).

The span at 1 to 28 shows a compositional bias: polar residues; the sequence is MMQESATETISNSSMNQNGMSTLSSQLD. Disordered regions lie at residues 1-45 and 275-305; these read MMQE…SEVS and IKHG…ITHH. The span at 287-296 shows a compositional bias: low complexity; that stretch reads SSSTTSTTTS. The C2H2-type zinc-finger motif lies at 337-362; it reads GVCKWPGCENICEDFGQFLKHLNNEH. The segment at 379–400 is leucine-zipper; that stretch reads VQQLEIQLSKERERLQAMMTHL. Residues 413-417 are ctbp1-binding; it reads PLNLV. A DNA-binding region (fork-head) is located at residues 495-585; that stretch reads RPPFTYATLI…SQKITASPTL (91 aa). A disordered region spans residues 672 to 706; that stretch reads DDEDCPMSLVTTANHSPELEEDRELEEEPLSEDLE. Acidic residues predominate over residues 690–706; that stretch reads LEEDRELEEEPLSEDLE.

As to quaternary structure, dimerization is required for DNA-binding. In terms of tissue distribution, at stage 15, expressed in the anterior/superior eye field and the caudal branchial arch. At later stages, expression persists in the retina and in the caudal branchial arch. Expressed in the pronephros and the tip of the tail. Beginning with stage 35, expression in the brain is localized to distinct subdomains of the anterior prosencephalon, the medial mesencephalon and to lateral domains of the hindbrain.

It localises to the nucleus. Transcriptional repressor. This is Forkhead box protein P2 from Xenopus laevis (African clawed frog).